A 413-amino-acid chain; its full sequence is Tyrosine--tRNA ligase (413 aa).

A 'HIGH' region motif is present at residues 57–66; sequence PTAPDIHLGH. The 'KMSKS' region motif lies at 241-245; that stretch reads KMSKS. Position 244 (lysine 244) interacts with ATP. Residues 351 to 412 form the S4 RNA-binding domain; the sequence is VWLPRLMVQA…GKRKFARLHT (62 aa).

The protein belongs to the class-I aminoacyl-tRNA synthetase family. TyrS type 2 subfamily. Homodimer.

The protein resides in the cytoplasm. It carries out the reaction tRNA(Tyr) + L-tyrosine + ATP = L-tyrosyl-tRNA(Tyr) + AMP + diphosphate + H(+). Catalyzes the attachment of tyrosine to tRNA(Tyr) in a two-step reaction: tyrosine is first activated by ATP to form Tyr-AMP and then transferred to the acceptor end of tRNA(Tyr). The polypeptide is Tyrosine--tRNA ligase (Moorella thermoacetica (strain ATCC 39073 / JCM 9320)).